Here is a 764-residue protein sequence, read N- to C-terminus: Ergosteryl-beta-glucosidase (764 aa).

The active-site Nucleophile is glutamate 515. Residues 588–629 form a disordered region; sequence HDTRAKTPTPEPSPASTVASVSTSTSKSGSSQPPSFIKPDNH. Threonine 594 is modified (phosphothreonine). The segment covering 601 to 622 has biased composition (low complexity); that stretch reads PASTVASVSTSTSKSGSSQPPS.

This sequence belongs to the glycosyl hydrolase 5 (cellulase A) family.

The protein resides in the cytoplasm. The protein localises to the cytosol. It localises to the vacuole membrane. It carries out the reaction ergosteryl 3-beta-D-glucoside + H2O = ergosterol + D-glucose. Ergosteryl beta-glucosidase involved in the ergosteryl beta-glucoside (EG) catabolic pathway and vacuole formation via hydrolysis of EG to generate glucose. Is also able to hydrolyze cholesteryl beta-glucoside and sitosteryl beta-glucoside to generate glucose; and C6-7-nitro-2,1,3-benzoxadiazole (NBD)-GlcCer to generate C6-NBD-ceramide (Cer). In Saccharomyces cerevisiae (strain ATCC 204508 / S288c) (Baker's yeast), this protein is Ergosteryl-beta-glucosidase.